The chain runs to 610 residues: UvrABC system protein C (610 aa).

The region spanning 16-94 (SQPGVYRMYD…IKLYQPRYNV (79 aa)) is the GIY-YIG domain. Positions 204–239 (DQVLNQLVARMEQASGDLRFEEAGRLRDQIQAVRRV) constitute a UVR domain.

It belongs to the UvrC family. In terms of assembly, interacts with UvrB in an incision complex.

It localises to the cytoplasm. Functionally, the UvrABC repair system catalyzes the recognition and processing of DNA lesions. UvrC both incises the 5' and 3' sides of the lesion. The N-terminal half is responsible for the 3' incision and the C-terminal half is responsible for the 5' incision. The protein is UvrABC system protein C of Erwinia tasmaniensis (strain DSM 17950 / CFBP 7177 / CIP 109463 / NCPPB 4357 / Et1/99).